The chain runs to 639 residues: E3 ubiquitin-protein ligase HEL2 (639 aa).

The interval 1–55 is disordered; sequence MSESVKENVTPTRNFRRTQGPQNNTKPHNDRKNFRRKQKKNNLSAEPNLTTSSAD. Residue Ser-2 is modified to N-acetylserine. Composition is skewed to polar residues over residues 7–26 and 43–54; these read ENVT…NNTK and LSAEPNLTTSSA. Thr-57 carries the post-translational modification Phosphothreonine. The segment at 64–104 adopts an RING-type zinc-finger fold; the sequence is CVICARKLTYVSLTPCHHKTCHICGFRQRALYNKKSCLICR. One can recognise an LIM zinc-binding domain in the interval 222–292; that stretch reads PMCAFCSGKR…QTCLDNKFVV (71 aa). A compositionally biased stretch (low complexity) spans 343 to 354; sequence SISSLPGSSSGS. Disordered stretches follow at residues 343-367 and 550-631; these read SISS…PEES and LESK…GKQK. At Ser-354 the chain carries Phosphoserine.

Belongs to the ZNF598/HEL2 family. In terms of assembly, interacts with the E2 ubiquitin-conjugating enzyme UBC4. Interacts with histones H3 and H4.

Its subcellular location is the cytoplasm. It catalyses the reaction S-ubiquitinyl-[E2 ubiquitin-conjugating enzyme]-L-cysteine + [acceptor protein]-L-lysine = [E2 ubiquitin-conjugating enzyme]-L-cysteine + N(6)-ubiquitinyl-[acceptor protein]-L-lysine.. Its pathway is protein modification; protein ubiquitination. In terms of biological role, E3 ubiquitin-protein ligase that plays a key role in the ribosome quality control (RQC), a pathway that takes place when a ribosome has stalled during translation, leading to degradation of nascent peptide chains. HEL2 is activated when ribosomes are stalled within an mRNA following translation of prematurely polyadenylated mRNAs. Acts as a ribosome collision sensor: specifically recognizes and binds collided ribosome and ubiquitinates the 40S ribosomal proteins RPS20/uS10 and RPS3/uS3. Catalyzes 'Lys-63'-linked polyubiquitination of RPS20/uS10, promoting recruitment of the RQT (ribosome quality control trigger) complex, which drives the disassembly of stalled ribosomes, followed by degradation of nascent peptides. HEL2 also acts as an activator of the No-Go decay (NGD) pathway by mediating polyubiquitination of monoubiquitinated RPS3/uS3 and RPS7/es7: RPS3/uS3 and RPS7/es7 are first monoubiquitinated by MAG2 and MOT2/NOT4, respectively, and HEL2 mediates formation of 'Lys-63'-linked polyubiquitin chains on monoubiquitin, leading to activation of the NGD pathway in a CUE2-mediated endonucleolytic cleavage. Polyubiquitination of RPS3/uS3 also triggers degradation of non-functional 18S rRNA. The RQC pathway and the integrated stress response (ISR) antagonize each other: HEL2 prevents the activation of GCN2, while GCN2 suppresses RQC activation. The RQC pathway functions as a preventive quality control in the secretory pathway: HEL2 binds preferentially to the pre-engaged secretory ribosome-nascent chain complexes and prevents mistargeting of secretory proteins into mitochondria. Independently of its role in RQC, also involved in the polyubiquitination and proteasomal-degradation of excess histone proteins. This Saccharomyces cerevisiae (strain ATCC 204508 / S288c) (Baker's yeast) protein is E3 ubiquitin-protein ligase HEL2.